Here is a 147-residue protein sequence, read N- to C-terminus: Hemoglobin subunit beta-1/2 (147 aa).

Val-2 is modified (N-acetylvaline). Residues 3–147 (HLSSEEKSAV…VANALAHKYH (145 aa)) enclose the Globin domain. Thr-13 carries the post-translational modification Phosphothreonine. Phosphoserine is present on Ser-45. Position 60 is an N6-acetyllysine (Lys-60). A heme b-binding site is contributed by His-64. Lys-83 is modified (N6-acetyllysine). Residue His-93 coordinates heme b. The residue at position 94 (Cys-94) is an S-nitrosocysteine. Lys-145 is modified (N6-acetyllysine).

The protein belongs to the globin family. As to quaternary structure, heterotetramer of two alpha chains and two beta chains. In terms of tissue distribution, red blood cells.

Its function is as follows. Involved in oxygen transport from the lung to the various peripheral tissues. This Oryctolagus cuniculus (Rabbit) protein is Hemoglobin subunit beta-1/2 (HBB1).